The sequence spans 377 residues: Citrate synthase (377 aa).

Residues histidine 258 and aspartate 313 contribute to the active site.

It belongs to the citrate synthase family. Homodimer. The N-terminus is blocked by acetylation.

It catalyses the reaction oxaloacetate + acetyl-CoA + H2O = citrate + CoA + H(+). The protein operates within carbohydrate metabolism; tricarboxylic acid cycle; isocitrate from oxaloacetate: step 1/2. With respect to regulation, allosterically inhibited by NADH. This Saccharolobus solfataricus (strain ATCC 35092 / DSM 1617 / JCM 11322 / P2) (Sulfolobus solfataricus) protein is Citrate synthase (gltA).